Here is a 1135-residue protein sequence, read N- to C-terminus: Eukaryotic translation initiation factor 3 subunit A (1135 aa).

Residues 319–501 (LQRMAAHVLL…NSIYFGTDLT (183 aa)) form the PCI domain. 2 stretches are compositionally biased toward basic and acidic residues: residues 588 to 623 (QNNAREEEEARRQEEESRKAKLAEQKRLEQEQEERE) and 829 to 899 (AAEE…RGGD). Disordered regions lie at residues 588–631 (QNNA…QNEI) and 829–1135 (AAEE…VKRR). Serine 908 carries the phosphoserine modification. 4 stretches are compositionally biased toward basic and acidic residues: residues 920 to 971 (ERNE…EPDS), 985 to 1045 (SRDD…EPQR), 1053 to 1081 (DAPRNADRENRRPAGERRDRDVRETRGDQ), and 1104 to 1125 (AREEKPASKRDQPQEKENKAAD).

It belongs to the eIF-3 subunit A family. In terms of assembly, component of the eukaryotic translation initiation factor 3 (eIF-3) complex. The eIF-3 complex interacts with pix.

Its subcellular location is the cytoplasm. RNA-binding component of the eukaryotic translation initiation factor 3 (eIF-3) complex, which is involved in protein synthesis of a specialized repertoire of mRNAs and, together with other initiation factors, stimulates binding of mRNA and methionyl-tRNAi to the 40S ribosome. The eIF-3 complex specifically targets and initiates translation of a subset of mRNAs involved in cell proliferation. This is Eukaryotic translation initiation factor 3 subunit A from Drosophila erecta (Fruit fly).